A 444-amino-acid polypeptide reads, in one-letter code: Putative methylesterase 13, chloroplastic (444 aa).

3 disordered regions span residues 1-32 (MGNS…KYKY), 49-90 (PSLS…KDSH), and 124-176 (SVVY…QLVD). A chloroplast-targeting transit peptide spans 1-60 (MGNSFTCISHEQEQRPKKSSGGGGNNSGKYKYVRRLSLMPSFRRRTLLPSLSCSGSSSTS). Residues 49–64 (PSLSCSGSSSTSSSKK) are compositionally biased toward low complexity. Residues 65 to 82 (GGIKAKTKKIRERHHHHH) show a composition bias toward basic residues. Polar residues predominate over residues 124–148 (SVVYPSAQPSGTSSGPVSAVQTPKK). Residues 149-164 (SSAGFVRSSSSRQRSS) show a composition bias toward low complexity. The region spanning 190–310 (FVLVHGGGFG…LFNQQLGSND (121 aa)) is the AB hydrolase-1 domain. Asp264 serves as the catalytic Acyl-ester intermediate. Catalysis depends on charge relay system residues Asp390 and His418.

Belongs to the AB hydrolase superfamily. Methylesterase family.

The protein localises to the plastid. Its subcellular location is the chloroplast. In terms of biological role, putative methylesterase. This Arabidopsis thaliana (Mouse-ear cress) protein is Putative methylesterase 13, chloroplastic.